The primary structure comprises 593 residues: Mitosis inducer protein kinase cdr1 (593 aa).

In terms of domain architecture, Protein kinase spans 12–258 (WRLGKTLGTG…IPEVFSHPFL (247 aa)). Residues 18–26 (LGTGSTSCV) and lysine 41 each bind ATP. Residue aspartate 128 is the Proton acceptor of the active site. Residue serine 550 is modified to Phosphoserine.

It belongs to the protein kinase superfamily. CAMK Ser/Thr protein kinase family. NIM1 subfamily. As to quaternary structure, interacts with msp1.

It catalyses the reaction L-seryl-[protein] + ATP = O-phospho-L-seryl-[protein] + ADP + H(+). The catalysed reaction is L-threonyl-[protein] + ATP = O-phospho-L-threonyl-[protein] + ADP + H(+). This protein, a dose-dependent mitotic inducer, appears to function as a negative regulator of mitosis inhibitor wee1 by phosphorylating and inactivating it. In Schizosaccharomyces pombe (strain 972 / ATCC 24843) (Fission yeast), this protein is Mitosis inducer protein kinase cdr1 (cdr1).